A 1462-amino-acid polypeptide reads, in one-letter code: DNA polymerase III PolC-type (1462 aa).

The 157-residue stretch at 424-580 (YVVFDVETTG…YDAEATGRLL (157 aa)) folds into the Exonuclease domain.

Belongs to the DNA polymerase type-C family. PolC subfamily.

The protein localises to the cytoplasm. It catalyses the reaction DNA(n) + a 2'-deoxyribonucleoside 5'-triphosphate = DNA(n+1) + diphosphate. Required for replicative DNA synthesis. This DNA polymerase also exhibits 3' to 5' exonuclease activity. The sequence is that of DNA polymerase III PolC-type from Streptococcus sanguinis (strain SK36).